Here is a 1464-residue protein sequence, read N- to C-terminus: ABC transporter G family member 35 (1464 aa).

Residues 1 to 26 (MDAAAEMQKVVSLRRGGGGSSSRGAA) are disordered. The 274-residue stretch at 173–446 (ANALGILPNK…FELMGFKCPE (274 aa)) folds into the ABC transporter 1 domain. 206-213 (GPPGSGKT) contributes to the ATP binding site. In terms of domain architecture, ABC transmembrane type-2 1 spans 524-737 (ELLKANIDRE…AQNAISVNEF (214 aa)). Transmembrane regions (helical) follow at residues 542–562 (FVYI…MTVF), 575–595 (GVIF…NGLS), 630–650 (IPMS…VIGF), 662–682 (LLML…GGAA), 686–706 (IVAN…GGFI), 715–735 (WWIW…ISVN), and 774–794 (IGFG…TLAL). One can recognise an ABC transporter 2 domain in the interval 867–1119 (LTFDNIKYSV…ELIKYFEGIK (253 aa)). Residue 912-919 (GVSGAGKT) coordinates ATP. In terms of domain architecture, ABC transmembrane type-2 2 spans 1192–1406 (NQCLACLWKM…TLYGLVASQF (215 aa)). The next 7 membrane-spanning stretches (helical) occupy residues 1213–1233 (AIRL…FWDL), 1243–1263 (LFNA…LNSQ), 1299–1319 (FPYT…MIGF), 1326–1346 (FFWY…YGMM), 1356–1376 (VASI…GFII), 1387–1407 (WYCW…SQFG), and 1436–1456 (VVAV…GFAI).

This sequence belongs to the ABC transporter superfamily. ABCG family. PDR (TC 3.A.1.205) subfamily.

It is found in the membrane. In terms of biological role, may be a general defense protein. This Oryza sativa subsp. japonica (Rice) protein is ABC transporter G family member 35.